The chain runs to 447 residues: Asparagine--tRNA ligase (447 aa).

It belongs to the class-II aminoacyl-tRNA synthetase family. In terms of assembly, homodimer.

The protein resides in the cytoplasm. It carries out the reaction tRNA(Asn) + L-asparagine + ATP = L-asparaginyl-tRNA(Asn) + AMP + diphosphate + H(+). This is Asparagine--tRNA ligase from Streptococcus pneumoniae (strain ATCC BAA-255 / R6).